Here is a 3938-residue protein sequence, read N- to C-terminus: MGNEASLEGGAGEGPLPPGGSGLGPGPGAGKPPSALAGGGQLPVAGAARAAGPPTPGLGLVPGPGPGPGPGSVSRRLDPKEPLGSQRATSPTPKQASATAPGRESPRETRAQGLSGQEAEGPRRTLQVDSRTQRSGRSPSVSPDRGSTPTSPYSVPQIAPLPSSTLCPICKTSDLTSTSSQPNFNTCTQCHNKVCNQCGFNPNPHLTQVKEWLCLNCQMQRALGMDMTTAPRSKSQQQLHSPALSPAHSPAKQPLGKPEQERSRSPGATQSGPRQAEAARATSVPGPTQATAPPEVGRVSPQPPLSTKPSTAEPRPPAGEAQGKSATTVPSGLGAAEQTQGGLTGKLFGLGASLLTQASTLMSVQPEADTQGQPSPSKGPPKIVFSDASKEAGPRPPGSGPGPGPTPGAKTEPGPRTGPGSGPGALAKTGGTPSPKHGRADHQAASKAAAKPKTMPKERAACPLCQAELNVGSRGPANYNTCTACKLRVCTLCGFNPTPHLVEKTEWLCLNCQTKRLLEGSLGEPAPLPLPTPQEPPAGVPQRAAGASPLKQKGPQGPGQPSGSLPPKASPQAAKASPQAAKASPQAKPLRASEPSKTSSSAPEKKTGIPVKAEPVPKPPPETAVPPGTPKAKSGVKRTDPATPVVKPVPEAPKSGEAEEPVPKPYSQDLSRSPQSLSDTGYSSDGVSSSQSEITGVVQQEVEQLDSAGVTGPRPPSPSELHKVGSSMRPSLEAQAVAPSGEWSKPPSGSAVEDQKRRPHSLSIMPEAFDSDEELGDILEEDDSLAMGRQREQQDTAESSDDFGSQLRHDYVEDSSEGGLSPLPPQPPARADMTDEEFMRRQILEMSAEEDNLEEDDTAVSGRGLAKHGAQKASARPRPESSQESVALPKRRLPHNATTGYEELLSEEGPAEPTDGALQGGLRRFKTIGLNSTGRLWSTSLDLGQGSDPNLDREPELEMESLTGSPEDRSRGEHSSTLPASTPSYTSGTSPTSLSSLEEDSDSSPSRRQRLEEAKQQRKARHRSHGPLLPTIEDSSEEEELREEEELLREQEKMREVEQQRIRSTARKTRRDKEELRAQRRRERSKTPPSNLSPIEDASPTEELRQAAEMEELHRSSCSEYSPSPSLDSEAETLDGGPTRLYKSGSEYNLPAFMSLCSPTETPSGSSTTPSSGRPLKSAEEAYEDMMRKAELLQRQQGQAAGARGPHGGPSQPTGPRSQGSFEYQDTLDHDYGGRASQPAADGTPAGLGATVYEEILQTSQSIARMRQASSRDLAFTEDKKKEKQFLNAESAYMDPMKQNGGPLTPGTSPTQLAAPVSFPTSTSSDSSGGRVIPDVRVTQHFAKEPQEPLKLHSSPASPSLASKEVGMTFSQGPGTPATTAMAPCPASLPRGYMTPAGPERSPSTSSTIHSYGQPPTTANYGSQTEELPHAPSGPAGSGRASREKPLSGGDGEVGPPQPSRGYSYFTGSSPPLSPSTPSESPTFSPSKLGPRATAEFSTQTPSLTPSSDIPRSVGTPSPMVAQGTQTPHRPSTPRLVWQQSSQEAPVMVITLASDASSQTRMVHASASTSPLCSPTDSQPASHSYSQTTPPSASQMPSEPAGPPGFPRAPSAGVDGPLALYGWGALPAENISLCRISSVPGTSRVEPGPRPPGTAVVDLRTAVKPTPIILTDQGMDLTSLAVEARKYGLALDPVPGRQSTAVQPLVINLNAQEQTHTFLATATTVSITMASSVLMAQQKQPVVYGDPFQSRLDFGQGSGSPVCLAQVKQVEQAVQTAPYRGGPRGRPREAKFARYNLPNQVTPLARRDILITQMGTAQSVSLKPGPVPEPGAEPHRATPAELRAHALPGTRKPHTVVVQMGEGAAGTVTTLLPEEPAGALDLTGMRPESRLACCDMAYKFPFGSSCTGTFHPAPSAPDKSVTDAALPGQSSGPFYSPRDPEPPEPLTFRAQGVVGPGPHEEQRPYPQGLPGRLYSSMSDTNLAEAGLNYHAQRIGQLFQGPGRDSAVDLSSLKHSYSLGFADGRYLGQGLQYGSFTDLRHPTDLLSHPLPMRPYSSVSNIYSDHRYGPRGDAVGFQEASLAQYSATTAREISRMCAALNSMDQYGGRHGGGSGGPDLVPYQPQHGPGLNAPQGLASLRSGLLGNPTYPEGQPSPGNLAQYGPAASQGTAVRQLLPSTATVRAADGMIYSTINTPIAATLPITTQPASVLRPMVRGGMYRPYGSGGVTAVPLTSLTRVPMIAPRVPLGPAGLYRYPAPSRFPIASTIPPAEGPVYLGKPAAAKASGAGGPPRPELPAGGAREEPLSTTAPPAVIKEAPVAQAPAPPPGQKPAGDAAAGSGSGVLGRPVMEKEEASQEDRQRKQQEQLLQLERERVELEKLRQLRLQEELERERVELQRHREEEQLLVQRELQELQTIKHHVLQQQQEERQAQFALQREQLAQQRLQLEQIQQLQQQLQQQLEEQKQRQKAPFPATCEAPSRGPPPAATELAQNGQYWPPLTHTAFIAVAGTEGPGQAREPVLHRGLPSSASDMSLQTEEQWEAGRSGIKKRHSMPRLRDACEPESGPDPSTVRRIADSSVQTDDEEGEGRYLLTRRRRTRRSADCSVQTDDEDNAEWEQPVRRRRSRLSRHSDSGSDSKHEASASSSAAAAAARAMSSVGIQTISDCSVQTEPEQLPRVSPAIHITAATDPKVEIVRYISAPEKTGRGESLACQTEPDGQAQGVAGPQLIGPTAISPYLPGIQIVTPGALGRFEKKKPDPLEIGYQAHLPPESLSQLVSRQPPKSPQVLYSPVSPLSPHRLLDTSFASSERLNKAHVSPQKQFIADSTLRQQTLPRPMKTLQRSLSDPKPLSPTAEESAKERFSLYQHQGGLGSQVSALPPNGLVRKVKRTLPSPPPEEAHLPLAGQVPSQLYAASLLQRGLAGPTTVPATKASLLRELDRDLRLVEHESTKLRKKQAELDEEEKEIDAKLKYLELGITQRKESLAKDRVGRDYPPLRGLGEHRDYLSDSELNQLRLQGCTTPAGQYVDYPASAAVPATPSGPTAFQQPRFPPAATQYTAGSSGPTQNGFLAHQAPTYTGPSTYPAPTYPPGTSYPAEPGLPSQPAFHPTGHYAAPTPMPTTQSAPFPVQADSHAAHQKPRQTSLADLEQKVPTNYEVISSPAVTVSSTPSETGYSGPAVSSSYEHGKAPEHPRGGDRSSVSQSPAPTYPSDSHYTSLEQNVPRNYVMIDDISELTKDSTPTASDSQRPEPLGPGGVSGRPGKDPGEPAVLEGPTLPCCYGRGEEESEEDSYDPRGKSGHHRSMESNGRPASTHYYSDSDYRHGARADKYGPGPMGPKHPSKNLAPAAISSKRSKHRKQGMEQKISKFSPIEEAKDVESDLASYPPPTVSSSLTSRSRKFQDEITYGLKKNVYEQQRYYGVSSRDTAEEDDRMYGGSSRSRVASAYSGEKLSSHDFSSRSKGYERERETAQRLQKAGPKPSSLSMAHGRARPPMRSQASEEESPVSPLGRPRPAGGALPPGDTCPQFCSSHSMPDVQEHVKDGPRAHAYKREEGYILDDSHCVVSDSEAYHLGQEETDWFDKPRDARSDRFRHHGGHTVSSSQKRGPARHSYHDYDEPPEEGLWPHDEGGPGRHTSAKEHRHHGDHGRHSGRHAGEEPGRRAARPHARDMGRHETRPHPQASPAPAMQKKGQPGYPSSADYSQPSRAPSAYHHASDSKKGSRQAHSGPTVLQPKPEAQAQPQMQGRQAVPGPQQSQPPSSRQTPSGTASRQPQTQQQQQQQQQQQQQQQQQQQQQQQQGLGQQAPQQAPSQARLQQQSQPTTRSTAPAASHPAGKPQPGPTTAPGPQPAGLPRAEQAGSSKPAAKAPQQGRAPQAQSAPGPAGAKTGARPGGTPGAPAGQPAAEGESVFSKILPGGAAEQAGKLTEAVSAFGKKFSSFW.

The disordered stretch occupies residues 1–158 (MGNEASLEGG…PTSPYSVPQI (158 aa)). The N-myristoyl glycine moiety is linked to residue G2. The segment covering 9–29 (GGAGEGPLPPGGSGLGPGPGA) has biased composition (gly residues). The span at 31 to 61 (KPPSALAGGGQLPVAGAARAAGPPTPGLGLV) shows a compositional bias: low complexity. Residues 62 to 70 (PGPGPGPGP) form a 4 X 2 AA tandem repeats of P-G region. Composition is skewed to polar residues over residues 86 to 98 (QRATSPTPKQASA) and 127 to 154 (QVDSRTQRSGRSPSVSPDRGSTPTSPYS). S142 carries the phosphoserine modification. The residue at position 145 (R145) is an Omega-N-methylarginine. 2 C4-type zinc fingers span residues 167–190 (CPICKTSDLTSTSSQPNFNTCTQC) and 195–217 (CNQCGFNPNPHLTQVKEWLCLNC). Disordered stretches follow at residues 228-346 (TTAP…LTGK) and 361-456 (LMSV…KTMP). The span at 230–240 (APRSKSQQQLH) shows a compositional bias: polar residues. Phosphoserine is present on residues S241 and S245. The span at 361 to 376 (LMSVQPEADTQGQPSP) shows a compositional bias: polar residues. A compositionally biased stretch (pro residues) spans 394–406 (PRPPGSGPGPGPT). C4-type zinc fingers lie at residues 462 to 485 (CPLCQAELNVGSRGPANYNTCTAC) and 490 to 512 (CTLCGFNPTPHLVEKTEWLCLNC). 4 disordered regions span residues 523 to 921 (GEPA…LQGG), 934 to 1247 (GRLW…TPAG), 1294 to 1541 (MDPM…WQQS), and 1561 to 1611 (RMVH…RAPS). Positions 526–539 (APLPLPTPQEPPAG) are enriched in pro residues. A compositionally biased stretch (low complexity) spans 548-589 (SPLKQKGPQGPGQPSGSLPPKASPQAAKASPQAAKASPQAKP). Repeat copies occupy residues 568 to 574 (KASPQAA), 575 to 581 (KASPQAA), and 582 to 588 (KASPQAK). A 3 X 7 AA tandem repeats of K-A-S-P-Q-A-[AK] region spans residues 568 to 588 (KASPQAAKASPQAAKASPQAK). Residues 616–629 (VPKPPPETAVPPGT) are compositionally biased toward pro residues. Residues 668–677 (QDLSRSPQSL) are compositionally biased toward polar residues. Over residues 678–692 (SDTGYSSDGVSSSQS) the composition is skewed to low complexity. Residues 693–702 (EITGVVQQEV) show a composition bias toward polar residues. Composition is skewed to acidic residues over residues 769–784 (FDSDEELGDILEEDDS) and 847–858 (SAEEDNLEEDDT). R863 carries the omega-N-methylarginine modification. S965 bears the Phosphoserine mark. Residues 979 to 996 (PASTPSYTSGTSPTSLSS) are compositionally biased toward low complexity. The stretch at 1032 to 1087 (IEDSSEEEELREEEELLREQEKMREVEQQRIRSTARKTRRDKEELRAQRRRERSKT) forms a coiled coil. Positions 1034-1047 (DSSEEEELREEEEL) are enriched in acidic residues. S1035 and S1036 each carry phosphoserine. Over residues 1048 to 1061 (LREQEKMREVEQQR) the composition is skewed to basic and acidic residues. Residue S1085 is modified to Phosphoserine. At T1087 the chain carries Phosphothreonine. Phosphoserine is present on residues S1093 and S1099. Basic and acidic residues predominate over residues 1102 to 1117 (EELRQAAEMEELHRSS). 2 stretches are compositionally biased toward low complexity: residues 1118-1128 (CSEYSPSPSLD) and 1158-1175 (SPTETPSGSSTTPSSGRP). A coiled-coil region spans residues 1176-1203 (LKSAEEAYEDMMRKAELLQRQQGQAAGA). Residues 1177–1192 (KSAEEAYEDMMRKAEL) show a composition bias toward basic and acidic residues. Positions 1194–1204 (QRQQGQAAGAR) are enriched in low complexity. Residues 1211 to 1224 (SQPTGPRSQGSFEY) show a composition bias toward polar residues. S1221 carries the phosphoserine modification. Residues 1318 to 1328 (SFPTSTSSDSS) are compositionally biased toward low complexity. Residue T1339 is glycosylated (O-linked (GlcNAc) threonine). Residues 1342 to 1351 (FAKEPQEPLK) are compositionally biased toward basic and acidic residues. 2 stretches are compositionally biased toward low complexity: residues 1352-1364 (LHSSPASPSLASK) and 1374-1386 (PGTPATTAMAPCP). A glycan (O-linked (GlcNAc) threonine) is linked at T1380. Over residues 1402–1426 (SPSTSSTIHSYGQPPTTANYGSQTE) the composition is skewed to polar residues. 3 positions are modified to phosphoserine: S1470, S1479, and S1481. Low complexity predominate over residues 1476 to 1487 (STPSESPTFSPS). 2 stretches are compositionally biased toward polar residues: residues 1496-1510 (EFSTQTPSLTPSSDI) and 1561-1597 (RMVHASASTSPLCSPTDSQPASHSYSQTTPPSASQMP). An omega-N-methylarginine mark is found at R1780 and R1784. R1794 carries the post-translational modification Asymmetric dimethylarginine; alternate. R1794 carries the omega-N-methylarginine; alternate modification. R1806 carries the omega-N-methylarginine modification. The disordered stretch occupies residues 1914 to 1964 (PSAPDKSVTDAALPGQSSGPFYSPRDPEPPEPLTFRAQGVVGPGPHEEQRP). Residue T1922 is glycosylated (O-linked (GlcNAc) threonine). Phosphoserine is present on residues S1978 and S2034. An omega-N-methylarginine mark is found at R2039 and R2069. 3 positions are modified to asymmetric dimethylarginine: R2243, R2253, and R2259. The disordered stretch occupies residues 2280–2305 (AAKASGAGGPPRPELPAGGAREEPLS). The O-linked (GlcNAc) threonine glycan is linked to T2307. 2 disordered regions span residues 2318-2343 (VAQAPAPPPGQKPAGDAAAGSGSGVL) and 2461-2486 (EEQKQRQKAPFPATCEAPSRGPPPAA). Residues 2345 to 2470 (RPVMEKEEAS…EEQKQRQKAP (126 aa)) are a coiled coil. O-linked (GlcNAc) threonine glycosylation is present at T2510. Positions 2513–2648 (PGQAREPVLH…HEASASSSAA (136 aa)) are disordered. Over residues 2527–2537 (SSASDMSLQTE) the composition is skewed to polar residues. At S2564 the chain carries Phosphoserine. Residues T2581 and T2608 each carry the phosphothreonine modification. Basic and acidic residues predominate over residues 2629–2641 (RHSDSGSDSKHEA). A glycan (O-linked (GlcNAc) threonine) is linked at T2685. An interaction with DAO region spans residues 2715-3263 (EPDGQAQGVA…GGVSGRPGKD (549 aa)). A phosphoserine mark is found at S2796, S2845, and S2851. The interval 2839 to 2859 (TLQRSLSDPKPLSPTAEESAK) is disordered. A glycan (O-linked (GlcNAc) threonine) is linked at T2930. The stretch at 2933–2975 (SLLRELDRDLRLVEHESTKLRKKQAELDEEEKEIDAKLKYLEL) forms a coiled coil. The interval 2934-2996 (LLRELDRDLR…DRVGRDYPPL (63 aa)) is sufficient for binding to ERC2. Residue S3007 is modified to Phosphoserine. Residues 3055 to 3068 (TQYTAGSSGPTQNG) are compositionally biased toward polar residues. Disordered stretches follow at residues 3055–3148 (TQYT…ADLE), 3162–3399 (AVTV…SRKF), 3414–3546 (QQRY…PRAH), and 3569–3910 (YHLG…VFSK). Basic and acidic residues predominate over residues 3184–3196 (EHGKAPEHPRGGD). Residues 3198 to 3222 (SSVSQSPAPTYPSDSHYTSLEQNVP) show a composition bias toward polar residues. S3286 bears the Phosphoserine mark. The segment covering 3304–3315 (ESNGRPASTHYY) has biased composition (polar residues). Basic and acidic residues-rich tracts occupy residues 3316–3328 (SDSDYRHGARADK), 3358–3377 (QGMEQKISKFSPIEEAKDVE), and 3450–3469 (LSSHDFSSRSKGYERERETA). Position 3368 is a phosphoserine (S3368). The residue at position 3488 (R3488) is an Omega-N-methylarginine. Positions 3506 to 3520 (PLGRPRPAGGALPPG) are enriched in low complexity. Basic and acidic residues-rich tracts occupy residues 3535–3546 (VQEHVKDGPRAH) and 3578–3588 (WFDKPRDARSD). Residues 3638-3651 (EHRHHGDHGRHSGR) are compositionally biased toward basic residues. Basic and acidic residues predominate over residues 3652–3676 (HAGEEPGRRAARPHARDMGRHETRP). Low complexity predominate over residues 3751–3820 (PQQSQPPSSR…ARLQQQSQPT (70 aa)). Residues 3772-3803 (QTQQQQQQQQQQQQQQQQQQQQQQQQGLGQQA) adopt a coiled-coil conformation. An Omega-N-methylarginine modification is found at R3822. Residues 3834 to 3848 (KPQPGPTTAPGPQPA) are compositionally biased toward pro residues. Low complexity-rich tracts occupy residues 3860-3887 (KPAAKAPQQGRAPQAQSAPGPAGAKTGA) and 3894-3904 (GAPAGQPAAEG).

As to quaternary structure, interacts with PCLO, ERC2/CAST1, RIMS1 and UNC13A. Interacts with TPRG1L. Interacts with DYNLL1 and DYNLL2; these interactions potentially link PTVs to dynein and myosin V motor complexes. Interacts with ATG5; this interaction is important for the regulation of presynaptic autophagy. Interacts (via C-terminus) with TRIO (via N-terminus). Interacts with CTBP1. Interacts with SIAH1; this interaction negatively regulates SIAH1 E3 ligase activity. Interacts (via coiled region) with DAO; the interaction is direct. Myristoylated. The N-terminal myristoylation is not sufficient for presynaptic localization. As to expression, detected at synapses in the stratum lucidum in the hippocampus CA3 region (at protein level).

The protein resides in the cytoplasm. It is found in the presynaptic active zone. Its subcellular location is the cytoskeleton. It localises to the cytoplasmic vesicle. The protein localises to the secretory vesicle. The protein resides in the synaptic vesicle membrane. Functionally, scaffold protein of the presynaptic cytomatrix at the active zone (CAZ) which is the place in the synapse where neurotransmitter is released. After synthesis, participates in the formation of Golgi-derived membranous organelles termed Piccolo-Bassoon transport vesicles (PTVs) that are transported along axons to sites of nascent synaptic contacts. At the presynaptic active zone, regulates the spatial organization of synaptic vesicle cluster, the protein complexes that execute membrane fusion and compensatory endocytosis. Also functions in processes other than assembly such as the regulation of specific presynaptic protein ubiquitination by interacting with SIAH1 or the regulation of presynaptic autophagy by associating with ATG5. Also mediates synapse to nucleus communication leading to reconfiguration of gene expression by associating with the transcriptional corepressor CTBP1 and by subsequently reducing the size of its pool available for nuclear import. Inhibits the activity of the proportion of DAO enzyme that localizes to the presynaptic active zone, which may modulate synaptic transmission. In Rattus norvegicus (Rat), this protein is Protein bassoon.